Here is a 637-residue protein sequence, read N- to C-terminus: Glutamate--cysteine ligase catalytic subunit (637 aa).

Residue M1 is modified to N-acetylmethionine. Phosphoserine is present on residues S5 and S8.

This sequence belongs to the glutamate--cysteine ligase type 3 family. Heterodimer of a catalytic heavy chain and a regulatory light chain.

The enzyme catalyses L-cysteine + L-glutamate + ATP = gamma-L-glutamyl-L-cysteine + ADP + phosphate + H(+). It carries out the reaction (2S)-2-aminobutanoate + L-glutamate + ATP = gamma-L-glutamyl-(2S)-2-aminobutanoate + ADP + phosphate + H(+). The protein operates within sulfur metabolism; glutathione biosynthesis; glutathione from L-cysteine and L-glutamate: step 1/2. With respect to regulation, feedback inhibition by glutathione. Its function is as follows. Catalyzes the ATP-dependent ligation of L-glutamate and L-cysteine and participates in the first and rate-limiting step in glutathione biosynthesis. The protein is Glutamate--cysteine ligase catalytic subunit of Mus musculus (Mouse).